The following is a 409-amino-acid chain: Gamma-glutamyl phosphate reductase (409 aa).

Belongs to the gamma-glutamyl phosphate reductase family.

It localises to the cytoplasm. The catalysed reaction is L-glutamate 5-semialdehyde + phosphate + NADP(+) = L-glutamyl 5-phosphate + NADPH + H(+). The protein operates within amino-acid biosynthesis; L-proline biosynthesis; L-glutamate 5-semialdehyde from L-glutamate: step 2/2. In terms of biological role, catalyzes the NADPH-dependent reduction of L-glutamate 5-phosphate into L-glutamate 5-semialdehyde and phosphate. The product spontaneously undergoes cyclization to form 1-pyrroline-5-carboxylate. This chain is Gamma-glutamyl phosphate reductase, found in Bartonella tribocorum (strain CIP 105476 / IBS 506).